A 426-amino-acid chain; its full sequence is CAAX prenyl protease 1 homolog (426 aa).

Over 1 to 3 (MVN) the chain is Lumenal. Residues 4–24 (YFIISISFFLLEHFYSFYLNF) traverse the membrane as a helical segment. Over 25-70 (RQSKLLKNLTKVPEYCKDRITQEDFKKSQEYSKAKLDYKTLTSTIQ) the chain is Cytoplasmic. Residues 71-91 (VLTTLLSFYYPVYPYFWNLSL) traverse the membrane as a helical segment. Over 92–106 (ELAEKIGYPNEIIRS) the chain is Lumenal. Residues 107–127 (CFFFAFTVGVSVITEIPFSYY) form a helical membrane-spanning segment. Residues 128 to 150 (YQFILEEKFGYNRMTRTLFIKDK) are Cytoplasmic-facing. Residues 151-171 (IISTLLMIGFGLPILSLAIFI) form a helical membrane-spanning segment. Topologically, residues 172 to 178 (INWSGPQ) are lumenal. A helical membrane pass occupies residues 179-199 (LWFYCWLLLVAITLLSITIYP). At 200–294 (TFIQPLFNKF…GHYKMSHTLK (95 aa)) the chain is on the cytoplasmic side. His282 contacts Zn(2+). Glu283 is a catalytic residue. Position 286 (His286) interacts with Zn(2+). Residues 295–315 (QMLLVQVHLVTLLYAFSLLIN) form a helical membrane-spanning segment. The Lumenal portion of the chain corresponds to 316–333 (DDQLYQQFGFVSSKDSVL). Residues 334 to 354 (VGLTLFMFLYSPIDRIFSLLI) traverse the membrane as a helical segment. The Cytoplasmic portion of the chain corresponds to 355-426 (NIFSRKYEFQ…KVALYKLKNK (72 aa)). A Zn(2+)-binding site is contributed by Glu362.

This sequence belongs to the peptidase M48B family. Zn(2+) is required as a cofactor.

It is found in the endoplasmic reticulum membrane. It catalyses the reaction Hydrolyzes the peptide bond -P2-(S-farnesyl or geranylgeranyl)C-P1'-P2'-P3'-COOH where P1' and P2' are amino acids with aliphatic side chains and P3' is any C-terminal residue.. Proteolytically removes the C-terminal three residues of farnesylated proteins. This chain is CAAX prenyl protease 1 homolog (zmpste24), found in Dictyostelium discoideum (Social amoeba).